A 287-amino-acid polypeptide reads, in one-letter code: Uricase (287 aa).

Residues K11 and T58 each act as charge relay system in the active site. Residues T58, D59, F160, R177, V219, Q220, and N246 each coordinate urate. Residue H248 is the Charge relay system of the active site. The Microbody targeting signal motif lies at 285 to 287; the sequence is SRL.

This sequence belongs to the uricase family.

It is found in the peroxisome. It catalyses the reaction urate + O2 + H2O = 5-hydroxyisourate + H2O2. It participates in purine metabolism; urate degradation; (S)-allantoin from urate: step 1/3. Its function is as follows. Catalyzes the oxidation of uric acid to 5-hydroxyisourate, which is further processed to form (S)-allantoin. The sequence is that of Uricase (uox) from Dictyostelium discoideum (Social amoeba).